Here is a 140-residue protein sequence, read N- to C-terminus: Small ribosomal subunit protein bS6 (140 aa).

Residues 96–140 (VTGQSEMLKAEENRSERRERRERPENAESNDGDDSDSNDSDNADE) are disordered. A compositionally biased stretch (basic and acidic residues) spans 103–121 (LKAEENRSERRERRERPEN). Positions 123 to 140 (ESNDGDDSDSNDSDNADE) are enriched in acidic residues.

The protein belongs to the bacterial ribosomal protein bS6 family.

In terms of biological role, binds together with bS18 to 16S ribosomal RNA. The chain is Small ribosomal subunit protein bS6 from Ectopseudomonas mendocina (strain ymp) (Pseudomonas mendocina).